The primary structure comprises 382 residues: Mannitol-1-phosphate 5-dehydrogenase (382 aa).

Position 3–14 (3–14 (ALHFGAGNIGRG)) interacts with NAD(+).

Belongs to the mannitol dehydrogenase family.

The enzyme catalyses D-mannitol 1-phosphate + NAD(+) = beta-D-fructose 6-phosphate + NADH + H(+). This is Mannitol-1-phosphate 5-dehydrogenase from Salmonella newport (strain SL254).